The primary structure comprises 1435 residues: RNA-directed RNA polymerase VP1 (1435 aa).

A RdRp catalytic domain is found at 604–880 (VLHNVLRPAY…KGVLGAPELF (277 aa)).

The protein belongs to the reoviridae RNA-directed RNA polymerase family. In terms of assembly, interacts with VP4.

It catalyses the reaction RNA(n) + a ribonucleoside 5'-triphosphate = RNA(n+1) + diphosphate. Its function is as follows. RNA-directed RNA polymerase involved in transcription and genome replication. Following infection, catalyzes the synthesis of fully conservative plus strands. After core assembly, which consists in recruitment of one capped plus-strand for each genomic segments and polymerase complexes, the polymerase switches mode and catalyzes the synthesis of complementary minus-strands. This chain is RNA-directed RNA polymerase VP1, found in Callospermophilus lateralis (Golden-mantled ground squirrel).